Here is a 145-residue protein sequence, read N- to C-terminus: LIM domain only protein 3 (145 aa).

LIM zinc-binding domains lie at 11–73 (KGCA…LFGT) and 75–137 (GNCA…GLMK).

In Rattus norvegicus (Rat), this protein is LIM domain only protein 3 (Lmo3).